The chain runs to 556 residues: Guanine nucleotide-binding protein-like 3 homolog (556 aa).

The segment at 29 to 50 (NRKVKKEAKKNGTTNKKEKTIS) is disordered. A coiled-coil region spans residues 58-95 (KEEILVQAEQEREKIKVRQEAAKEAAKIHRIEKRKNNL). Residues 138-317 (ASEVRKTVEI…LIDSPGVILV (180 aa)) form the CP-type G domain. Residues 184-187 (NKID), 266-273 (GFPNVGKS), and 310-313 (DSPG) contribute to the GTP site. Disordered stretches follow at residues 461-508 (APHN…PESL) and 525-556 (KKQK…AMEM). Positions 466 to 478 (DEEEDDDDEMETD) are enriched in acidic residues. A compositionally biased stretch (basic residues) spans 525–535 (KKQKKKSKKTA).

The protein belongs to the TRAFAC class YlqF/YawG GTPase family.

Its subcellular location is the nucleus. May play a role in regulating cellular proliferation in both germline and somatic tissues. The sequence is that of Guanine nucleotide-binding protein-like 3 homolog from Caenorhabditis elegans.